An 89-amino-acid chain; its full sequence is UPF0237 protein LMOf2365_0562 (89 aa).

The ACT domain occupies 4–78 (VLTVIGKDNV…EDLQVKIHIQ (75 aa)).

This sequence belongs to the UPF0237 family.

The chain is UPF0237 protein LMOf2365_0562 from Listeria monocytogenes serotype 4b (strain F2365).